The primary structure comprises 60 residues: UPF0434 protein Ent638_1436 (60 aa).

Belongs to the UPF0434 family.

The protein is UPF0434 protein Ent638_1436 of Enterobacter sp. (strain 638).